A 154-amino-acid polypeptide reads, in one-letter code: Superoxide dismutase [Cu-Zn] (154 aa).

Positions 45, 47, and 62 each coordinate Cu cation. Cys-56 and Cys-146 are disulfide-bonded. Residues His-62, His-70, His-79, and Asp-82 each coordinate Zn(2+). His-120 is a Cu cation binding site.

It belongs to the Cu-Zn superoxide dismutase family. Homodimer. It depends on Cu cation as a cofactor. Zn(2+) is required as a cofactor.

The protein resides in the cytoplasm. The enzyme catalyses 2 superoxide + 2 H(+) = H2O2 + O2. Destroys radicals which are normally produced within the cells and which are toxic to biological systems. The chain is Superoxide dismutase [Cu-Zn] from Bombyx mori (Silk moth).